The primary structure comprises 284 residues: Acetylglutamate kinase (284 aa).

Residues 66-67, arginine 88, and asparagine 179 each bind substrate; that span reads GG.

This sequence belongs to the acetylglutamate kinase family. ArgB subfamily.

It localises to the cytoplasm. The enzyme catalyses N-acetyl-L-glutamate + ATP = N-acetyl-L-glutamyl 5-phosphate + ADP. The protein operates within amino-acid biosynthesis; L-arginine biosynthesis; N(2)-acetyl-L-ornithine from L-glutamate: step 2/4. Catalyzes the ATP-dependent phosphorylation of N-acetyl-L-glutamate. The sequence is that of Acetylglutamate kinase from Actinobacillus pleuropneumoniae serotype 5b (strain L20).